We begin with the raw amino-acid sequence, 462 residues long: ATP synthase subunit beta (462 aa).

An ATP-binding site is contributed by 151–158; sequence GGAGVGKT.

This sequence belongs to the ATPase alpha/beta chains family. F-type ATPases have 2 components, CF(1) - the catalytic core - and CF(0) - the membrane proton channel. CF(1) has five subunits: alpha(3), beta(3), gamma(1), delta(1), epsilon(1). CF(0) has four main subunits: a(1), b(1), b'(1) and c(9-12).

The protein resides in the cell inner membrane. The enzyme catalyses ATP + H2O + 4 H(+)(in) = ADP + phosphate + 5 H(+)(out). Its function is as follows. Produces ATP from ADP in the presence of a proton gradient across the membrane. The catalytic sites are hosted primarily by the beta subunits. The protein is ATP synthase subunit beta of Chlorobium chlorochromatii (strain CaD3).